The following is an 85-amino-acid chain: Small ribosomal subunit protein uS12m (85 aa).

Belongs to the universal ribosomal protein uS12 family.

The protein resides in the mitochondrion matrix. It is found in the kinetoplast. In terms of biological role, protein S12 is involved in the translation initiation step. This chain is Small ribosomal subunit protein uS12m (RPS12), found in Leishmania tarentolae (Sauroleishmania tarentolae).